The chain runs to 191 residues: Protein GrpE (191 aa).

Belongs to the GrpE family. As to quaternary structure, homodimer.

Its subcellular location is the cytoplasm. In terms of biological role, participates actively in the response to hyperosmotic and heat shock by preventing the aggregation of stress-denatured proteins, in association with DnaK and GrpE. It is the nucleotide exchange factor for DnaK and may function as a thermosensor. Unfolded proteins bind initially to DnaJ; upon interaction with the DnaJ-bound protein, DnaK hydrolyzes its bound ATP, resulting in the formation of a stable complex. GrpE releases ADP from DnaK; ATP binding to DnaK triggers the release of the substrate protein, thus completing the reaction cycle. Several rounds of ATP-dependent interactions between DnaJ, DnaK and GrpE are required for fully efficient folding. The sequence is that of Protein GrpE from Listeria monocytogenes serotype 4a (strain HCC23).